The primary structure comprises 430 residues: Glutamate-1-semialdehyde 2,1-aminomutase (430 aa).

Lys-267 bears the N6-(pyridoxal phosphate)lysine mark.

It belongs to the class-III pyridoxal-phosphate-dependent aminotransferase family. HemL subfamily. As to quaternary structure, homodimer. Requires pyridoxal 5'-phosphate as cofactor.

It localises to the cytoplasm. It carries out the reaction (S)-4-amino-5-oxopentanoate = 5-aminolevulinate. It functions in the pathway porphyrin-containing compound metabolism; protoporphyrin-IX biosynthesis; 5-aminolevulinate from L-glutamyl-tRNA(Glu): step 2/2. This Anaeromyxobacter dehalogenans (strain 2CP-1 / ATCC BAA-258) protein is Glutamate-1-semialdehyde 2,1-aminomutase.